The primary structure comprises 320 residues: Heterogeneous nuclear ribonucleoprotein A1-like 3 (320 aa).

RRM domains follow at residues 14-97 (RKLF…DSQR) and 105-184 (KKIF…LSKQ). Disordered regions lie at residues 182–218 (SKQE…NFGR) and 271–320 (SNFG…GRRF). Residues 197 to 218 (SGSGNFGGGRGGGFGGNDNFGR) are compositionally biased toward gly residues. Residues 308 to 320 (SSSSSSYGSGRRF) are compositionally biased toward low complexity.

In Homo sapiens (Human), this protein is Heterogeneous nuclear ribonucleoprotein A1-like 3.